The primary structure comprises 339 residues: Dihydroorotase (339 aa).

Zn(2+) contacts are provided by histidine 12 and histidine 14. Substrate contacts are provided by residues 14 to 16 (HVR) and asparagine 40. The Zn(2+) site is built by lysine 94, histidine 133, histidine 167, and aspartate 239. An N6-carboxylysine modification is found at lysine 94. A substrate-binding site is contributed by histidine 133. Residue aspartate 239 is part of the active site. Positions 243 and 255 each coordinate substrate.

It belongs to the metallo-dependent hydrolases superfamily. DHOase family. Class II DHOase subfamily. As to quaternary structure, homodimer. Zn(2+) serves as cofactor.

It carries out the reaction (S)-dihydroorotate + H2O = N-carbamoyl-L-aspartate + H(+). It functions in the pathway pyrimidine metabolism; UMP biosynthesis via de novo pathway; (S)-dihydroorotate from bicarbonate: step 3/3. Functionally, catalyzes the reversible cyclization of carbamoyl aspartate to dihydroorotate. In Helicobacter pylori (strain P12), this protein is Dihydroorotase.